Here is a 495-residue protein sequence, read N- to C-terminus: DNA double-strand break repair helicase HerA (495 aa).

ATP contacts are provided by residues arginine 141, 150 to 155 (GSGKSN), and 458 to 459 (KI).

This sequence belongs to the HerA family. As to quaternary structure, forms a hexamer or a heptamer. Interacts with Mre11.

It catalyses the reaction Couples ATP hydrolysis with the unwinding of duplex DNA at the replication fork by translocating in the 5'-3' direction. This creates two antiparallel DNA single strands (ssDNA). The leading ssDNA polymer is the template for DNA polymerase III holoenzyme which synthesizes a continuous strand.. It carries out the reaction ATP + H2O = ADP + phosphate + H(+). The enzyme catalyses Couples ATP hydrolysis with the unwinding of duplex DNA by translocating in the 3'-5' direction.. With respect to regulation, ATPase activity is slightly stimulated by either circular single- or double-stranded (ds)DNA with a weak preference for dsDNA. Helicase activity is stimulated by Mre11. Involved in DNA double-strand break (DSB) repair. Probably acts with NurA to stimulate resection of the 5' strand and produce the long 3' single-strand that is required for RadA loading. Has DNA-dependent ATPase activity and bidirectional DNA helicase activity. Loads on either a 3' or a 5' DNA tail for subsequent DNA unwinding. Can also unwind blunt-ended dsDNA, Holliday junction and splayed-arm DNA. The polypeptide is DNA double-strand break repair helicase HerA (Sulfurisphaera tokodaii (strain DSM 16993 / JCM 10545 / NBRC 100140 / 7) (Sulfolobus tokodaii)).